The following is a 1388-amino-acid chain: Rho-associated protein kinase 2 (1388 aa).

Residues 1-24 (MSRPPPTGKMPGAPEAAAGDGAGA) form a disordered region. The Protein kinase domain occupies 92 to 354 (YDVVKVIGRG…VEEIKSASFF (263 aa)). ATP-binding positions include 98–106 (IGRGAFGEV) and K121. The active-site Proton acceptor is D214. The 69-residue stretch at 357–425 (DQWNWDNIRE…FRENLLLSDS (69 aa)) folds into the AGC-kinase C-terminal domain. Residues 363 to 784 (NIRETAAPVV…LNELLKQKDV (422 aa)) are interaction with PPP1R12A. The interaction with NPM1 stretch occupies residues 373–420 (PELSSDIDSSNFDDIEDDKGDVETFPIPKAFVGNQLPFIGFTYFRENL). A Phosphothreonine; by ROCK2 modification is found at T414. Coiled coils occupy residues 439–1024 (SEES…EKQL) and 1052–1131 (SDTD…IGMD). Residues 497-573 (TLRQLEREKA…LDEANALLRT (77 aa)) enclose the REM-1 domain. Residues 513 to 530 (AEYQRKADHEADKKRNLE) show a composition bias toward basic and acidic residues. The interval 513–532 (AEYQRKADHEADKKRNLEND) is disordered. Y722 bears the Phosphotyrosine; by SRC mark. Residues 979 to 1047 (TSDVANLANE…LAEIMNRKEP (69 aa)) enclose the RhoBD domain. An RHOA binding region spans residues 979–1047 (TSDVANLANE…LAEIMNRKEP (69 aa)). S1137 carries the post-translational modification Phosphoserine. Positions 1150–1349 (ESRLEGWLSL…WVSRLVKKIP (200 aa)) constitute a PH domain. At T1212 the chain carries Phosphothreonine. The Phorbol-ester/DAG-type zinc-finger motif lies at 1260-1315 (GHEFIPTLYHFPTNCEACMKPLWHMFKPPPALECSRCHIKCHKDHMDKKEEIIAPC). The disordered stretch occupies residues 1345–1388 (VKKIPKKPPAPDPFARSSPRTSMKIQQNQSIRRPSRQLAPNKPS). A phosphoserine mark is found at S1362 and S1374. Polar residues predominate over residues 1362 to 1376 (SPRTSMKIQQNQSIR).

It belongs to the protein kinase superfamily. AGC Ser/Thr protein kinase family. Homodimer. Interacts with IRS1. Interacts with RAF1. Interacts with RHOA (activated by GTP), RHOB, RHOC. Interacts with PPP1R12A. Interacts with EP300. Interacts with CHORDC1. Interacts with BRCA2. Interacts with NPM1; this interaction enhances its activity. Interacts with SORL1. Interacts with PJVK. It depends on Mg(2+) as a cofactor. Post-translationally, autophosphorylated. Phosphorylation at Tyr-722 reduces its binding to RHOA and is crucial for focal adhesion dynamics. Dephosphorylation by PTPN11 stimulates its RHOA binding activity. In terms of processing, cleaved by granzyme B during apoptosis. This leads to constitutive activation of the kinase and membrane blebbing. In terms of tissue distribution, highly expressed in brain, lung, liver, skeletal muscle, kidney and testis.

It is found in the cytoplasm. It localises to the cell membrane. The protein localises to the nucleus. Its subcellular location is the cytoskeleton. The protein resides in the microtubule organizing center. It is found in the centrosome. It carries out the reaction L-seryl-[protein] + ATP = O-phospho-L-seryl-[protein] + ADP + H(+). It catalyses the reaction L-threonyl-[protein] + ATP = O-phospho-L-threonyl-[protein] + ADP + H(+). With respect to regulation, activated by RHOA binding. Inhibited by Y-27632. Protein kinase which is a key regulator of actin cytoskeleton and cell polarity. Involved in regulation of smooth muscle contraction, actin cytoskeleton organization, stress fiber and focal adhesion formation, neurite retraction, cell adhesion and motility via phosphorylation of ADD1, BRCA2, CNN1, EZR, DPYSL2, EP300, MSN, MYL9/MLC2, NPM1, RDX, PPP1R12A and VIM. Phosphorylates SORL1 and IRF4. Acts as a negative regulator of VEGF-induced angiogenic endothelial cell activation. Positively regulates the activation of p42/MAPK1-p44/MAPK3 and of p90RSK/RPS6KA1 during myogenic differentiation. Plays an important role in the timely initiation of centrosome duplication. Inhibits keratinocyte terminal differentiation. May regulate closure of the eyelids and ventral body wall through organization of actomyosin bundles. Plays a critical role in the regulation of spine and synaptic properties in the hippocampus. Plays a role in placental homeostasis during the perinatal period. Plays an important role in generating the circadian rhythm of the aortic myofilament Ca(2+) sensitivity and vascular contractility by modulating the myosin light chain phosphorylation. This chain is Rho-associated protein kinase 2 (Rock2), found in Rattus norvegicus (Rat).